A 1479-amino-acid polypeptide reads, in one-letter code: Type VII secretion system protein EssC (1479 aa).

Positions 1 to 189 are required for substrate secretion, protein missing this segment is unstable; sequence MHKLIIKYNK…ASSLIRLTQE (189 aa). At 1–229 the chain is on the cytoplasmic side; it reads MHKLIIKYNK…RPPQPIQKNN (229 aa). Residues 230 to 252 traverse the membrane as a helical segment; the sequence is TVIWRSIIPPLVMIALTVVIFLV. Over 253–256 the chain is Extracellular; that stretch reads RPIG. Residues 257 to 279 traverse the membrane as a helical segment; it reads IYILMMIGMSTVTIVFGITTYFS. Over 280–1479 the chain is Cytoplasmic; sequence EKKKYNKDVE…QAYQKIRWFK (1200 aa). 2 FtsK domains span residues 652–846 and 997–1183; these read DDIL…QDSN and QGPM…SEVS. ATP-binding positions include 672-679 and 1014-1021; these read GTTGSGKS and GSPGYGRT. The tract at residues 1249 to 1479 is required for substrate secretion, truncated protein is stable; it reads MMPDEIKYED…QAYQKIRWFK (231 aa).

This sequence belongs to the EssC family. As to quaternary structure, homooligomer. Interacts with EsaE.

It is found in the cell membrane. Component of the type VII secretion system (Ess). Required for the secretion of substrates including EsxA and EsxB. However, unable to support secretion of the substrate protein EsxC. This chain is Type VII secretion system protein EssC, found in Staphylococcus aureus (strain NCTC 8325 / PS 47).